Consider the following 648-residue polypeptide: SRSF protein kinase 1 (648 aa).

The segment at 1–57 (MERKVLALQARKKRTKAKKDKAQRKPETQHRGSAPHSESDIPEQEEEILGSDDDEQE) is disordered. Positions 10–22 (ARKKRTKAKKDKA) are enriched in basic residues. Acidic residues predominate over residues 40–57 (DIPEQEEEILGSDDDEQE). Position 51 is a phosphoserine (Ser51). The 567-residue stretch at 80–646 (YHVIRKLGWG…AAECLRHPWL (567 aa)) folds into the Protein kinase domain. Residues 86 to 94 (LGWGHFSTV) and Lys109 contribute to the ATP site. Asp213 functions as the Proton acceptor in the catalytic mechanism. Disordered stretches follow at residues 238–354 (WQRS…APEI) and 395–464 (PSFL…DSKG). A compositionally biased stretch (basic residues) spans 265–276 (KNKKKKLKKKQK). 2 stretches are compositionally biased toward basic and acidic residues: residues 277-288 (RQAELLEKRMQE) and 304-317 (NKQE…DRPL). 3 positions are modified to phosphoserine: Ser309, Ser311, and Ser333. Composition is skewed to polar residues over residues 333–343 (SNSIGQDQTLT) and 396–441 (SFLN…TQLE). Thr448 is subject to Phosphothreonine. Ser450 carries the phosphoserine modification. Ser548 bears the Phosphoserine; by CK2 mark.

This sequence belongs to the protein kinase superfamily. CMGC Ser/Thr protein kinase family. Monomer. Found in a multisubunit complex containing seven proteins, named toposome, which separates entangled circular chromatin DNA during chromosome segregation. Interacts with HHV-1 ICP27 protein. Interacts with DNAJC8 and AHSA1/AHA1 and this mediates formation of a complex with the Hsp70 /Hsp90 machinery. Binds to IGF2BP1, SYNCRIP, HNRNPA2B1 and HNRNPC. Interacts with SAFB/SAFB1 and SAFB2 which inhibits its activity. The cofactor is Mg(2+). As to expression, predominantly expressed in the testis but is also present at lower levels in heart, spleen, liver, brain, kidney, lung and skeletal muscle. Present in all germinal cells in the seminiferous tubules but not in mature spermatozoa.

It is found in the cytoplasm. The protein localises to the nucleus. It localises to the nucleoplasm. The protein resides in the nucleus matrix. Its subcellular location is the microsome. It is found in the nucleus speckle. The protein localises to the chromosome. The enzyme catalyses L-seryl-[protein] + ATP = O-phospho-L-seryl-[protein] + ADP + H(+). It catalyses the reaction L-threonyl-[protein] + ATP = O-phospho-L-threonyl-[protein] + ADP + H(+). Its activity is regulated as follows. Activated by phosphorylation on Ser-51 and Ser-548. Its function is as follows. Serine/arginine-rich protein-specific kinase which specifically phosphorylates its substrates at serine residues located in regions rich in arginine/serine dipeptides, known as RS domains and is involved in the phosphorylation of SR splicing factors and the regulation of splicing. Plays a central role in the regulatory network for splicing, controlling the intranuclear distribution of splicing factors in interphase cells and the reorganization of nuclear speckles during mitosis. Can influence additional steps of mRNA maturation, as well as other cellular activities, such as chromatin reorganization in somatic and sperm cells and cell cycle progression. Phosphorylates SFRS2, ZRSR2, LBR and PRM1. Phosphorylates SRSF1 using a directional (C-terminal to N-terminal) and a dual-track mechanism incorporating both processive phosphorylation (in which the kinase stays attached to the substrate after each round of phosphorylation) and distributive phosphorylation steps (in which the kinase and substrate dissociate after each phosphorylation event). The RS domain of SRSF1 binds first to a docking groove in the large lobe of the kinase domain of SRPK1. This induces certain structural changes in SRPK1 and/or RRM2 domain of SRSF1, allowing RRM2 to bind the kinase and initiate phosphorylation. The cycles continue for several phosphorylation steps in a processive manner (steps 1-8) until the last few phosphorylation steps (approximately steps 9-12). During that time, a mechanical stress induces the unfolding of the beta-4 motif in RRM2, which then docks at the docking groove of SRPK1. This also signals RRM2 to begin to dissociate, which facilitates SRSF1 dissociation after phosphorylation is completed. Can mediate hepatitis B virus (HBV) core protein phosphorylation. It plays a negative role in the regulation of HBV replication through a mechanism not involving the phosphorylation of the core protein but by reducing the packaging efficiency of the pregenomic RNA (pgRNA) without affecting the formation of the viral core particles. Can induce splicing of exon 10 in MAPT/TAU. The chain is SRSF protein kinase 1 from Mus musculus (Mouse).